Here is a 158-residue protein sequence, read N- to C-terminus: C-type lectin lectoxin-Enh4 (158 aa).

An N-terminal signal peptide occupies residues 1 to 23 (MGQFTVVSLGLLAMFLSLSGAKG). Disulfide bonds link C26-C37, C54-C154, and C129-C146. Residues 33–155 (RNGVCNKLFP…CASLHPFICQ (123 aa)) form the C-type lectin domain. A Mannose-binding motif is present at residues 119–121 (EPN). The Ca(2+) site is built by E127, N142, and D143.

It belongs to the true venom lectin family. In terms of tissue distribution, expressed by the venom gland.

The protein resides in the secreted. Mannose-binding lectin which recognizes specific carbohydrate structures and agglutinates a variety of animal cells by binding to cell-surface glycoproteins and glycolipids. May be a calcium-dependent lectin. This Pseudoferania polylepis (Macleay's water snake) protein is C-type lectin lectoxin-Enh4.